Consider the following 282-residue polypeptide: Acyl-CoA-binding domain-containing protein 6 (282 aa).

A disordered region spans residues 1–39; that stretch reads MATPFLPSGATTGDSGGELSSGDDSGDMESFQTPEAEGT. Residue S41 is modified to Phosphoserine. Positions 42–127 constitute an ACB domain; sequence LAELFEKAAA…VKKLDPGWNP (86 aa). An acyl-CoA is bound by residues 69 to 73 and K95; that span reads YARFK. S106 is subject to Phosphoserine. Y114 contacts an acyl-CoA. ANK repeat units follow at residues 191 to 220 and 224 to 253; these read EGRA…GINC and EGQT…DPTL.

In terms of assembly, monomer.

It is found in the cytoplasm. Its subcellular location is the nucleus. Binds long-chain acyl-coenzyme A molecules with a strong preference for unsaturated C18:1-CoA, lower affinity for unsaturated C20:4-CoA, and very weak affinity for saturated C16:0-CoA. Does not bind fatty acids. Plays a role in protein N-myristoylation. In Mus musculus (Mouse), this protein is Acyl-CoA-binding domain-containing protein 6 (Acbd6).